Consider the following 544-residue polypeptide: Probable protein kinase UbiB (544 aa).

Positions 123 to 505 (EFDEQALASA…GRQKSHNVRS (383 aa)) constitute a Protein kinase domain. ATP is bound by residues 129–137 (LASASIAQV) and lysine 156. Aspartate 291 (proton acceptor) is an active-site residue. The helical transmembrane segment at 522–540 (LPLWLSCGTLVTVLLVLLL) threads the bilayer.

It belongs to the ABC1 family. UbiB subfamily.

The protein localises to the cell inner membrane. It functions in the pathway cofactor biosynthesis; ubiquinone biosynthesis [regulation]. Functionally, is probably a protein kinase regulator of UbiI activity which is involved in aerobic coenzyme Q (ubiquinone) biosynthesis. This chain is Probable protein kinase UbiB, found in Actinobacillus pleuropneumoniae serotype 5b (strain L20).